The following is a 764-amino-acid chain: Protein sey1 (764 aa).

Over 1–659 the chain is Cytoplasmic; the sequence is MQQSAQLITE…KRSIISTATR (659 aa). A GB1/RHD3-type G domain is found at 31 to 246; that stretch reads GFDYHVVAVL…NPKYLFKPCY (216 aa). A GTP-binding site is contributed by 41-48; sequence GSQSTGKS. Coiled coils occupy residues 302–322 and 421–443; these read EELL…QRLE and DAEQ…MREE. A helical membrane pass occupies residues 660 to 680; it reads VPGYFWALLAVLGWNEFVSVL. Residues 681-683 lie on the Lumenal side of the membrane; that stretch reads KNP. A helical membrane pass occupies residues 684–704; sequence VLLTLLLIVVSFLFILVQTGL. At 705 to 764 the chain is on the cytoplasmic side; that stretch reads AGPVKAFAERSVRNAVNSMGEKLAEKLDDYRSTSPASETTSGRVISAENSSVDEKVSTTP. The disordered stretch occupies residues 731–764; that stretch reads LDDYRSTSPASETTSGRVISAENSSVDEKVSTTP. A compositionally biased stretch (polar residues) spans 736-754; it reads STSPASETTSGRVISAENS.

It belongs to the TRAFAC class dynamin-like GTPase superfamily. GB1/RHD3 GTPase family. RHD3 subfamily.

Its subcellular location is the endoplasmic reticulum membrane. Its function is as follows. Cooperates with the reticulon proteins and tubule-shaping DP1 family proteins to generate and maintain the structure of the tubular endoplasmic reticulum network. Has GTPase activity, which is required for its function in ER organization. The polypeptide is Protein sey1 (sey1) (Schizosaccharomyces japonicus (strain yFS275 / FY16936) (Fission yeast)).